The following is an 874-amino-acid chain: Alanine--tRNA ligase (874 aa).

Positions 562, 566, 665, and 669 each coordinate Zn(2+).

This sequence belongs to the class-II aminoacyl-tRNA synthetase family. The cofactor is Zn(2+).

It localises to the cytoplasm. The catalysed reaction is tRNA(Ala) + L-alanine + ATP = L-alanyl-tRNA(Ala) + AMP + diphosphate. Catalyzes the attachment of alanine to tRNA(Ala) in a two-step reaction: alanine is first activated by ATP to form Ala-AMP and then transferred to the acceptor end of tRNA(Ala). Also edits incorrectly charged Ser-tRNA(Ala) and Gly-tRNA(Ala) via its editing domain. The polypeptide is Alanine--tRNA ligase (Pseudomonas aeruginosa (strain ATCC 15692 / DSM 22644 / CIP 104116 / JCM 14847 / LMG 12228 / 1C / PRS 101 / PAO1)).